The following is a 391-amino-acid chain: Succinyl-diaminopimelate desuccinylase (391 aa).

His74 contributes to the Zn(2+) binding site. Residue Asp76 is part of the active site. Zn(2+) is bound at residue Asp107. The active-site Proton acceptor is Glu141. Zn(2+)-binding residues include Glu142, Glu170, and His360.

It belongs to the peptidase M20A family. DapE subfamily. Homodimer. Zn(2+) is required as a cofactor. It depends on Co(2+) as a cofactor.

The enzyme catalyses N-succinyl-(2S,6S)-2,6-diaminopimelate + H2O = (2S,6S)-2,6-diaminopimelate + succinate. The protein operates within amino-acid biosynthesis; L-lysine biosynthesis via DAP pathway; LL-2,6-diaminopimelate from (S)-tetrahydrodipicolinate (succinylase route): step 3/3. Functionally, catalyzes the hydrolysis of N-succinyl-L,L-diaminopimelic acid (SDAP), forming succinate and LL-2,6-diaminopimelate (DAP), an intermediate involved in the bacterial biosynthesis of lysine and meso-diaminopimelic acid, an essential component of bacterial cell walls. The polypeptide is Succinyl-diaminopimelate desuccinylase (Variovorax paradoxus (strain S110)).